A 176-amino-acid chain; its full sequence is NADH-quinone oxidoreductase subunit I 2 (176 aa).

2 consecutive 4Fe-4S ferredoxin-type domains span residues 45 to 77 (IVLT…MEAA) and 87 to 116 (RWFR…MTPD). Cys57, Cys60, Cys63, Cys67, Cys96, Cys99, Cys102, and Cys106 together coordinate [4Fe-4S] cluster.

The protein belongs to the complex I 23 kDa subunit family. As to quaternary structure, NDH-1 is composed of 14 different subunits. Subunits NuoA, H, J, K, L, M, N constitute the membrane sector of the complex. It depends on [4Fe-4S] cluster as a cofactor.

The protein resides in the cell inner membrane. It catalyses the reaction a quinone + NADH + 5 H(+)(in) = a quinol + NAD(+) + 4 H(+)(out). Its function is as follows. NDH-1 shuttles electrons from NADH, via FMN and iron-sulfur (Fe-S) centers, to quinones in the respiratory chain. The immediate electron acceptor for the enzyme in this species is believed to be ubiquinone. Couples the redox reaction to proton translocation (for every two electrons transferred, four hydrogen ions are translocated across the cytoplasmic membrane), and thus conserves the redox energy in a proton gradient. The sequence is that of NADH-quinone oxidoreductase subunit I 2 from Geobacter sulfurreducens (strain ATCC 51573 / DSM 12127 / PCA).